Consider the following 182-residue polypeptide: MPRVVPDQRSKFENEEFFRKLSRECEIKYTGFRDRPHEERQARFQNACRDGRSEIAFVATGTNLSLQFFPASWQGEQRQTPSREYVDLEREAGKVYLKAPMILNGVCVIWKGWIDLQRLDGMGCLEFDEERAQQEDALAQQAFEEARRRTREFEDRDRSHREEMEVRVSQLLAVTGKKTTRP.

A173 is modified (phosphoserine).

It belongs to the CBF-beta family. Heterodimer with RUNX1, RUNX2 and RUNX3. Interacts with COPRS. Found in a complex with PRMT5 and RUNX1. As to quaternary structure, (Microbial infection) Interacts with HIV-1 Vif; forming an active cullin-5-RING E3 ubiquitin-protein ligase complex (ECS complex).

Its subcellular location is the nucleus. Its function is as follows. Forms the heterodimeric complex core-binding factor (CBF) with RUNX family proteins (RUNX1, RUNX2, and RUNX3). RUNX members modulate the transcription of their target genes through recognizing the core consensus binding sequence 5'-TGTGGT-3', or very rarely, 5'-TGCGGT-3', within their regulatory regions via their runt domain, while CBFB is a non-DNA-binding regulatory subunit that allosterically enhances the sequence-specific DNA-binding capacity of RUNX. The heterodimers bind to the core site of a number of enhancers and promoters, including murine leukemia virus, polyomavirus enhancer, T-cell receptor enhancers, LCK, IL3 and GM-CSF promoters. CBF complexes repress ZBTB7B transcription factor during cytotoxic (CD8+) T cell development. They bind to RUNX-binding sequence within the ZBTB7B locus acting as transcriptional silencer and allowing for cytotoxic T cell differentiation. (Microbial infection) Following infection, hijacked by the HIV-1 Vif protein, leading to the formation a cullin-5-RING E3 ubiquitin-protein ligase complex (ECS complex) that catalyzes ubiquitination and degradation of APOBEC3F and APOBEC3G. The complex can also ubiquitinate APOBEC3H to some extent. Association with HIV-1 Vif protein also inhibits the transcription coactivator activity of CBFB/CBF-beta. This is Core-binding factor subunit beta (CBFB) from Homo sapiens (Human).